The primary structure comprises 463 residues: Heterogeneous nuclear ribonucleoprotein K (463 aa).

Met-1 carries the N-acetylmethionine modification. The segment at 1–37 (METEQPEETFPNTETNGEFGKRPAEDMEEEQAFKRSR) is disordered. The interval 1 to 276 (METEQPEETF…GRGGRPMPPS (276 aa)) is necessary for interaction with DDX1. Residues 19-37 (FGKRPAEDMEEEQAFKRSR) show a composition bias toward basic and acidic residues. N6-acetyllysine; alternate is present on Lys-34. Lys-34 is covalently cross-linked (Glycyl lysine isopeptide (Lys-Gly) (interchain with G-Cter in SUMO1); alternate). Lys-34 participates in a covalent cross-link: Glycyl lysine isopeptide (Lys-Gly) (interchain with G-Cter in SUMO2); alternate. The tract at residues 35-197 (RSRNTDEMVE…STDRVVLIGG (163 aa)) is interaction with ASFV p30. Phosphoserine is present on Ser-36. Thr-39 is subject to Phosphothreonine. The KH 1 domain occupies 42–104 (MVELRILLQS…ETIGEILKKI (63 aa)). Residues Lys-52 and Lys-60 each participate in a glycyl lysine isopeptide (Lys-Gly) (interchain with G-Cter in SUMO2) cross-link. Tandem repeats lie at residues 54–76 (AGAV…NASV) and 59–62 (GKGG). The tract at residues 54 to 421 (AGAVIGKGGK…QIRHESGASI (368 aa)) is 2 X 22 AA approximate repeats. Residues 59–407 (GKGGKNIKAL…LAGSIIGKGG (349 aa)) are 5 X 4 AA repeats of G-X-G-G. 2 positions are modified to phosphoserine: Ser-75 and Ser-116. The region spanning 144–209 (DCELRLLIHQ…DRVVECIKII (66 aa)) is the KH 2 domain. Lys-163 is covalently cross-linked (Glycyl lysine isopeptide (Lys-Gly) (interchain with G-Cter in SUMO1); alternate). Lys-163 participates in a covalent cross-link: Glycyl lysine isopeptide (Lys-Gly) (interchain with G-Cter in SUMO2); alternate. The residue at position 198 (Lys-198) is an N6-acetyllysine. Positions 209 to 337 (ILDLISESPI…RPGDRYDGMV (129 aa)) are interaction with ZIK1. A phosphoserine mark is found at Ser-214 and Ser-216. Lys-219 participates in a covalent cross-link: Glycyl lysine isopeptide (Lys-Gly) (interchain with G-Cter in SUMO2); alternate. Lys-219 is subject to N6-succinyllysine; alternate. The tract at residues 236–273 (YGGFTMMFDDRRGRPVGFPMRGRGGFDRMPPGRGGRPM) is RNA-binding RGG-box. 3 tandem repeats follow at residues 245–250 (DRRGRP), 257–260 (GRGG), and 267–270 (GRGG). The interval 245-329 (DRRGRPVGFP…LMAYDRRGRP (85 aa)) is 2 X 6 AA approximate repeats. Residues 250 to 329 (PVGFPMRGRG…LMAYDRRGRP (80 aa)) form a disordered region. The span at 252 to 266 (GFPMRGRGGFDRMPP) shows a compositional bias: low complexity. Residues 276–285 (SRRDYDDMSP) are compositionally biased toward basic and acidic residues. Phosphoserine is present on Ser-284. The 3-4 repeat unit spans residues 295-298 (GRGG). Arg-316 is subject to Omega-N-methylarginine. The stretch at 324-329 (DRRGRP) is one 2-2 repeat. An Omega-N-methylarginine modification is found at Arg-377. Ser-379 is modified (phosphoserine). Position 380 is a phosphotyrosine (Tyr-380). In terms of domain architecture, KH 3 spans 387–451 (IITTQVTIPK…DQIQNAQYLL (65 aa)). 2 repeat units span residues 399-421 (AGSI…GASI) and 404-407 (GKGG). Residue Lys-405 is modified to N6-acetyllysine; alternate. Residue Lys-405 forms a Glycyl lysine isopeptide (Lys-Gly) (interchain with G-Cter in SUMO2); alternate linkage. Ser-420 is modified (phosphoserine). Residue Lys-422 forms a Glycyl lysine isopeptide (Lys-Gly) (interchain with G-Cter in SUMO1); alternate linkage. Lys-422 participates in a covalent cross-link: Glycyl lysine isopeptide (Lys-Gly) (interchain with G-Cter in SUMO2); alternate. Lys-422 is covalently cross-linked (Glycyl lysine isopeptide (Lys-Gly) (interchain with G-Cter in SUMO); alternate).

Identified in the spliceosome C complex. Part of a transcription inhibitory ribonucleoprotein complex composed at least of the circular RNA circZNF827, ZNF827 and HNRNPL. Interacts with RBM42 and ZIK1. Interacts with BRDT. Interacts with ANKRD28. Interacts with ASFV p30 protein. Interacts with DDX1. Interacts with MDM2; this interaction leads to ubiquitination and proteasomal degradation. Interacts with p53/TP53. Interacts with IVNS1ABP (via BACK domain); the interaction is direct. Interacts with PPIA/CYPA. As to quaternary structure, (Microbial infection) Interacts with HCV core protein. Post-translationally, arg-296 and Arg-299 are dimethylated, probably to asymmetric dimethylarginine. Sumoylated by CBX4. Sumoylation is increased upon DNA damage, such as that produced by doxorubicin, etoposide, UV light and camptothecin, due to enhanced CBX4 phosphorylation by HIPK2 under these conditions. In terms of processing, ubiquitinated by MDM2. Doxorubicin treatment does not affect monoubiquitination, but slightly decreases HNRNPK poly-ubiquitination. Post-translationally, O-glycosylated (O-GlcNAcylated), in a cell cycle-dependent manner.

Its subcellular location is the cytoplasm. The protein resides in the nucleus. It localises to the nucleoplasm. The protein localises to the cell projection. It is found in the podosome. One of the major pre-mRNA-binding proteins. Binds tenaciously to poly(C) sequences. Likely to play a role in the nuclear metabolism of hnRNAs, particularly for pre-mRNAs that contain cytidine-rich sequences. Can also bind poly(C) single-stranded DNA. Plays an important role in p53/TP53 response to DNA damage, acting at the level of both transcription activation and repression. When sumoylated, acts as a transcriptional coactivator of p53/TP53, playing a role in p21/CDKN1A and 14-3-3 sigma/SFN induction. As far as transcription repression is concerned, acts by interacting with long intergenic RNA p21 (lincRNA-p21), a non-coding RNA induced by p53/TP53. This interaction is necessary for the induction of apoptosis, but not cell cycle arrest. As part of a ribonucleoprotein complex composed at least of ZNF827, HNRNPL and the circular RNA circZNF827 that nucleates the complex on chromatin, may negatively regulate the transcription of genes involved in neuronal differentiation. This Homo sapiens (Human) protein is Heterogeneous nuclear ribonucleoprotein K (HNRNPK).